Reading from the N-terminus, the 1687-residue chain is MTDPLLDSQPASSTGEMDGLCPELLLIPPPLSNRGILGPVQSPCPSRDPAPIPTEPGCLLVEATATEEGPGNMEIIVETVAGTLTPGAPGETPAPKLPPGEREPSQEAGTPLPGQETAEEENVEKEEKSDTQKDSQKAVDKGQGAQRLEGDVVSGTESLFKTHMCPECKRCFKKRTHLVEHLHLHFPDPSLQCPNCQKFFTSKSKLKTHLLRELGEKAHHCPLCHYSAVERNALNRHMASMHEDISNFYSDTYACPVCREEFRLSQALKEHLKSHTAAAAAEPLPLRCFQEGCSYAAPDRKAFIKHLKETHGVRAVECRHHSCPMLFATAEAMEAHHKSHYAFHCPHCDFACSNKHLFRKHKKQGHPGSEELRCTFCPFATFNPVAYQDHVGKMHAHEKIHQCPECNFATAHKRVLIRHMLLHTGEKPHKCELCDFTCRDVSYLSKHMLTHSNTKDYMCTECGYVTKWKHYLRVHMRKHAGDLRYQCNQCSYRCHRADQLSSHKLRHQGKSLMCEVCAFACKRKYELQKHMASQHHPGTPAPLYPCHYCSYQSRHKQAVLSHENCKHTRLREFHCALCDYRTFSNTTLLFHKRKAHGYVPGDQAWQLRYASQEPEGAMQGPTPPPDSEPSNQLSARPEGPGHEPGTVVDPSLDQALPEMSEEVNTGRQEGSEAPHGGDLGGSPSPAEVEEGSCTLHLEALGVELESVTEPPLEEVTETAPMEFRPLGLEGPDGLEGPELSSFEGIGTSDLSAEENPLLEKPVSEPSTNPPSLEEAPNNWVGTFKTTPPAETAPLPPLPESESLLKALRRQDKEQAEALVLEGRVQMVVIQGEGRAFRCPHCPFITRREKALNLHSRTGCQGRREPLLCPECGASFKQQRGLSTHLLKKCPVLLRKNKGLPRPDSPIPLQPVLPGTQASEDTESGKPPPASQEAELLLPKDAPLELPREPEETEEPLATVSGSPVPPAGNSLPTEAPKKHCFDPVPPAGNSSPTEAPKKHHLDPVPPAGNSSPTEALKKHRFEQGKFHCNSCPFLCSRLSSITSHVAEGCRGGRGGGGKRGTPQTQPDVSPLSNGDSAPPKNGSTESSSGDGDTVLVQKQKGARFSCPTCPFSCQQERALRTHQIRGCPLEESGELHCSLCPFTAPAATALRLHQKRRHPTAAPARGPRPHLQCGDCGFTCKQSRCMQQHRRLKHEGVKPHQCPFCDFSTTRRYRLEAHQSRHTGIGRIPCSSCPQTFGTNSKLRLHRLRVHDKTPTHFCPLCDYSGYLRHDITRHVNSCHQGTPAFACSQCEAQFSSETALKQHALRRHPEPAQPAPGSPAETTEGPLHCSRCGLLCPSPASLRGHTRKQHPRLECGACQEAFPSRLALDEHRRQQHFSHRCQLCDFAARERVGLVKHYLEQHEETSAAVAASDGDGDAGQPPLHCPFCDFTCRHQLVLDHHVKGHGGTRLYKCTDCAYSTKNRQKITWHSRIHTGEKPYHCHLCPYACADPSRLKYHMRIHKEERKYLCPECGYKCKWVNQLKYHMTKHTGLKPYQCPECEYCTNRADALRVHQETRHREARAFMCEQCGKAFKTRFLLRTHLRKHSEAKPYVCNVCHRAFRWAAGLRHHALTHTDRHPFFCRLCNYKAKQKFQVVKHVRRHHPDQADPNQGVGKDPTTPTVHLHDVQLEDPSPPAPAAPHTGPEG.

2 disordered regions span residues 1-23 and 83-150; these read MTDP…LCPE and TLTP…RLEG. Positions 125-140 are enriched in basic and acidic residues; the sequence is KEEKSDTQKDSQKAVD. Residue S154 is modified to Phosphoserine. 3 C2H2-type zinc fingers span residues 163 to 185, 219 to 242, and 253 to 275; these read HMCP…LHLH, HHCP…ASMH, and YACP…LKSH. The C2H2-type 4; atypical zinc-finger motif lies at 286–311; sequence LRCFQEGCSYAAPDRKAFIKHLKETH. C2H2-type zinc fingers lie at residues 316–340, 343–366, 372–395, 401–423, 429–451, 457–479, 485–507, 512–536, 544–567, and 573–596; these read VECR…HKSH, FHCP…KQGH, LRCT…GKMH, HQCP…MLLH, HKCE…MLTH, YMCT…MRKH, YQCN…KLRH, LMCE…SQHH, YPCH…NCKH, and FHCA…RKAH. Residue K594 forms a Glycyl lysine isopeptide (Lys-Gly) (interchain with G-Cter in SUMO2) linkage. Disordered stretches follow at residues 613 to 690, 704 to 798, 897 to 935, 947 to 1014, and 1052 to 1092; these read EPEG…EVEE, LESV…PPLP, KGLP…EAEL, REPE…SPTE, and GRGG…GDGD. Over residues 725-739 the composition is skewed to low complexity; it reads PLGLEGPDGLEGPEL. Positions 1061-1075 are enriched in polar residues; it reads TPQTQPDVSPLSNGD. A compositionally biased stretch (low complexity) spans 1082 to 1092; the sequence is GSTESSSGDGD. C2H2-type zinc fingers lie at residues 1135–1158, 1171–1194, 1200–1222, 1228–1251, 1257–1280, 1286–1309, 1328–1351, 1354–1377, 1380–1403, 1424–1446, 1452–1474, 1480–1502, 1508–1530, 1536–1559, and 1565–1587; these read LHCS…KRRH, LQCG…RLKH, HQCP…QSRH, IPCS…LRVH, HFCP…NSCH, FACS…LRRH, LHCS…RKQH, LECG…RQQH, HRCQ…LEQH, LHCP…VKGH, YKCT…SRIH, YHCH…MRIH, YLCP…MTKH, YQCP…ETRH, and FMCE…LRKH. Residue K1193 forms a Glycyl lysine isopeptide (Lys-Gly) (interchain with G-Cter in SUMO2) linkage. Residue K1242 forms a Glycyl lysine isopeptide (Lys-Gly) (interchain with G-Cter in SUMO2) linkage. K1591 is covalently cross-linked (Glycyl lysine isopeptide (Lys-Gly) (interchain with G-Cter in SUMO2)). 2 consecutive C2H2-type zinc fingers follow at residues 1593–1615 and 1621–1643; these read YVCN…ALTH and FFCR…VRRH. Positions 1638-1687 are disordered; that stretch reads KHVRRHHPDQADPNQGVGKDPTTPTVHLHDVQLEDPSPPAPAAPHTGPEG.

Belongs to the krueppel C2H2-type zinc-finger protein family.

The protein localises to the nucleus. Functionally, may be involved in transcriptional regulation. The protein is Zinc finger protein 142 of Homo sapiens (Human).